The chain runs to 194 residues: Ion-translocating oxidoreductase complex subunit A (194 aa).

Transmembrane regions (helical) follow at residues 5–25 (VLILISAVLVNNFVLVQFLGL), 47–67 (FVLTLSSVLAYLTWAYILVPF), 72–92 (LRTISFILVIAVAVQFTEMFV), 102–122 (VLGVFLPLITSNCAVLGVALL), 135–155 (LTYGFGAAIGFSLVLILFAAM), and 172–192 (SIGLITAGLMSLAFMGFSGLI).

Belongs to the NqrDE/RnfAE family. In terms of assembly, the complex is composed of six subunits: RnfA, RnfB, RnfC, RnfD, RnfE and RnfG.

It is found in the cell inner membrane. Functionally, part of a membrane-bound complex that couples electron transfer with translocation of ions across the membrane. The protein is Ion-translocating oxidoreductase complex subunit A of Alcanivorax borkumensis (strain ATCC 700651 / DSM 11573 / NCIMB 13689 / SK2).